We begin with the raw amino-acid sequence, 297 residues long: tRNA pseudouridine synthase A (297 aa).

Residue D72 is the Nucleophile of the active site. Position 144 (Y144) interacts with substrate.

The protein belongs to the tRNA pseudouridine synthase TruA family. Homodimer.

The catalysed reaction is uridine(38/39/40) in tRNA = pseudouridine(38/39/40) in tRNA. Formation of pseudouridine at positions 38, 39 and 40 in the anticodon stem and loop of transfer RNAs. The chain is tRNA pseudouridine synthase A from Mycobacterium bovis (strain ATCC BAA-935 / AF2122/97).